The following is a 547-amino-acid chain: Chaperonin GroEL 1 (547 aa).

ATP contacts are provided by residues 30–33, K51, 87–91, G415, and D496; these read TLGP and DGTTT.

It belongs to the chaperonin (HSP60) family. As to quaternary structure, forms a cylinder of 14 subunits composed of two heptameric rings stacked back-to-back. Interacts with the co-chaperonin GroES.

The protein resides in the cytoplasm. It carries out the reaction ATP + H2O + a folded polypeptide = ADP + phosphate + an unfolded polypeptide.. In terms of biological role, together with its co-chaperonin GroES, plays an essential role in assisting protein folding. The GroEL-GroES system forms a nano-cage that allows encapsulation of the non-native substrate proteins and provides a physical environment optimized to promote and accelerate protein folding. The sequence is that of Chaperonin GroEL 1 from Gluconacetobacter diazotrophicus (strain ATCC 49037 / DSM 5601 / CCUG 37298 / CIP 103539 / LMG 7603 / PAl5).